Here is a 367-residue protein sequence, read N- to C-terminus: NADH-quinone oxidoreductase subunit H (367 aa).

Helical transmembrane passes span 19–39 (ALFI…AYLV), 87–107 (ICFL…WAVI), 132–152 (IGVL…IIAG), 178–198 (IGLT…GEIV), 204–224 (MPYW…ISAL), 266–286 (ILIN…PLNI), 291–311 (IIPG…CFIW), and 328–348 (GWKV…SILV).

The protein belongs to the complex I subunit 1 family. In terms of assembly, NDH-1 is composed of 14 different subunits. Subunits NuoA, H, J, K, L, M, N constitute the membrane sector of the complex.

The protein localises to the cell inner membrane. It carries out the reaction a quinone + NADH + 5 H(+)(in) = a quinol + NAD(+) + 4 H(+)(out). Functionally, NDH-1 shuttles electrons from NADH, via FMN and iron-sulfur (Fe-S) centers, to quinones in the respiratory chain. The immediate electron acceptor for the enzyme in this species is believed to be ubiquinone. Couples the redox reaction to proton translocation (for every two electrons transferred, four hydrogen ions are translocated across the cytoplasmic membrane), and thus conserves the redox energy in a proton gradient. This subunit may bind ubiquinone. The protein is NADH-quinone oxidoreductase subunit H of Ehrlichia chaffeensis (strain ATCC CRL-10679 / Arkansas).